Reading from the N-terminus, the 80-residue chain is Defensin-like protein 16 (80 aa).

An N-terminal signal peptide occupies residues 1 to 29 (MAKFASIITLIFAALVLFAAFDAPAMVEA). At glutamine 30 the chain carries Pyrrolidone carboxylic acid. 4 cysteine pairs are disulfide-bonded: cysteine 33–cysteine 80, cysteine 44–cysteine 65, cysteine 50–cysteine 74, and cysteine 54–cysteine 76.

The protein belongs to the DEFL family. In terms of tissue distribution, predominantly expressed in leaves.

The protein resides in the secreted. In terms of biological role, confers broad-spectrum resistance to pathogens. Has antifungal activity in vitro. The sequence is that of Defensin-like protein 16 (PDF1.2A) from Arabidopsis thaliana (Mouse-ear cress).